Consider the following 155-residue polypeptide: Small ribosomal subunit protein uS7 (155 aa).

The protein belongs to the universal ribosomal protein uS7 family. As to quaternary structure, part of the 30S ribosomal subunit. Contacts proteins S9 and S11.

In terms of biological role, one of the primary rRNA binding proteins, it binds directly to 16S rRNA where it nucleates assembly of the head domain of the 30S subunit. Is located at the subunit interface close to the decoding center, probably blocks exit of the E-site tRNA. The sequence is that of Small ribosomal subunit protein uS7 from Thioalkalivibrio sulfidiphilus (strain HL-EbGR7).